The following is a 200-amino-acid chain: Superoxide dismutase [Mn] 1 (200 aa).

Residues histidine 29, histidine 76, aspartate 158, and histidine 162 each coordinate Mn(2+).

The protein belongs to the iron/manganese superoxide dismutase family. Requires Mn(2+) as cofactor.

The enzyme catalyses 2 superoxide + 2 H(+) = H2O2 + O2. Its function is as follows. Destroys superoxide anion radicals which are normally produced within the cells and which are toxic to biological systems. The sequence is that of Superoxide dismutase [Mn] 1 (sod1) from Haloferax volcanii (strain ATCC 29605 / DSM 3757 / JCM 8879 / NBRC 14742 / NCIMB 2012 / VKM B-1768 / DS2) (Halobacterium volcanii).